Reading from the N-terminus, the 762-residue chain is Acyl-homoserine lactone acylase PvdQ (762 aa).

Positions 1 to 23 are cleaved as a signal peptide; sequence MGMRTVLTGLAGMLLGSMMPVQA. The propeptide at 194–216 is spacer peptide; that stretch reads ALSGEQAFQVAEQRRQRFRLERG. The active-site Nucleophile is the Ser-217.

This sequence belongs to the peptidase S45 family. In terms of assembly, heterodimer of an alpha subunit and a beta subunit processed from the same precursor.

It localises to the periplasm. The enzyme catalyses an N-acyl-L-homoserine lactone + H2O = L-homoserine lactone + a carboxylate. Its function is as follows. Catalyzes the deacylation of acyl-homoserine lactone (AHL or acyl-HSL), releasing homoserine lactone (HSL) and the corresponding fatty acid. Possesses a specificity for the degradation of long-chain acyl-HSLs (side chains of 11 to 14 carbons in length). Degrades 3-oxo-C12-HSL, one of the two main AHL signal molecules of P.aeruginosa, and thereby functions as a quorum quencher, inhibiting the las quorum-sensing system. Therefore, may enable P.aeruginosa to modulate its own quorum-sensing-dependent pathogenic potential. Also appears to be required for pyoverdin biosynthesis. This Pseudomonas aeruginosa (strain ATCC 15692 / DSM 22644 / CIP 104116 / JCM 14847 / LMG 12228 / 1C / PRS 101 / PAO1) protein is Acyl-homoserine lactone acylase PvdQ (pvdQ).